An 83-amino-acid polypeptide reads, in one-letter code: Small ribosomal subunit protein bS16 (83 aa).

It belongs to the bacterial ribosomal protein bS16 family.

The polypeptide is Small ribosomal subunit protein bS16 (Pseudomonas fluorescens (strain SBW25)).